We begin with the raw amino-acid sequence, 612 residues long: Proton pump-interactor 1 (612 aa).

A disordered region spans residues 1-58 (MGVEVVNSGGFEVAPAPFEGKPEKNGKLDQGKGDDAPINFGSVGELPKNAEENNNKVV). The span at 20-35 (GKPEKNGKLDQGKGDD) shows a compositional bias: basic and acidic residues. 2 coiled-coil regions span residues 90 to 113 (PKIK…RTGV) and 251 to 314 (LDGV…NSEY). Basic and acidic residues-rich tracts occupy residues 374–387 (LSRD…DEKP), 434–446 (EKAK…KNVA), 459–498 (PQKE…EKAA), and 505–519 (AQKE…EQEK). Residues 374–572 (LSRDGRMRNP…PIRNRTRGRG (199 aa)) form a disordered region. A coiled-coil region spans residues 466-526 (VDAATAKEMR…QEKKAKKKTG (61 aa)). Over residues 531–545 (TETEEVPEASEEEIE) the composition is skewed to acidic residues. A Phosphoserine modification is found at Ser540. The segment covering 549–564 (QEEKPQKEKVFKEKPI) has biased composition (basic and acidic residues). The helical transmembrane segment at 591-611 (VYAAPAALVVLLLLVLGYYYV) threads the bilayer.

It belongs to the plant Proton pump-interactor protein family. As to quaternary structure, interacts with AHA1 via N-terminal region. As to expression, strongly expressed in root and shoot vascular systems, particularly in meristematic and sink tissues. Also present in pollen, stigmas and siliques, but not in developing embryos.

The protein localises to the cell membrane. It localises to the endoplasmic reticulum membrane. In terms of biological role, promotes AHA1 plasma membrane ATPase activity by binding to a site different from the 14-3-3 binding site. The chain is Proton pump-interactor 1 (PPI1) from Arabidopsis thaliana (Mouse-ear cress).